Consider the following 36-residue polypeptide: Egg-laying-like hormone (36 aa).

A Lysine amide modification is found at K36.

As to expression, supra, subesophageal ganglia and segmental ganglia of the ventral nerve cord and brain.

Functionally, may be involved in leech reproduction. The polypeptide is Egg-laying-like hormone (Theromyzon tessulatum (Duck leech)).